A 949-amino-acid polypeptide reads, in one-letter code: Bifunctional glutamine synthetase adenylyltransferase/adenylyl-removing enzyme (949 aa).

Positions 1–450 (MQNQGNKVLS…HFNATVGGTD (450 aa)) are adenylyl removase. Positions 455-949 (NDHWTALFWN…IEIYNEILAI (495 aa)) are adenylyl transferase.

It belongs to the GlnE family. It depends on Mg(2+) as a cofactor.

The catalysed reaction is [glutamine synthetase]-O(4)-(5'-adenylyl)-L-tyrosine + phosphate = [glutamine synthetase]-L-tyrosine + ADP. It carries out the reaction [glutamine synthetase]-L-tyrosine + ATP = [glutamine synthetase]-O(4)-(5'-adenylyl)-L-tyrosine + diphosphate. Its function is as follows. Involved in the regulation of glutamine synthetase GlnA, a key enzyme in the process to assimilate ammonia. When cellular nitrogen levels are high, the C-terminal adenylyl transferase (AT) inactivates GlnA by covalent transfer of an adenylyl group from ATP to specific tyrosine residue of GlnA, thus reducing its activity. Conversely, when nitrogen levels are low, the N-terminal adenylyl removase (AR) activates GlnA by removing the adenylyl group by phosphorolysis, increasing its activity. The regulatory region of GlnE binds the signal transduction protein PII (GlnB) which indicates the nitrogen status of the cell. The chain is Bifunctional glutamine synthetase adenylyltransferase/adenylyl-removing enzyme from Shewanella frigidimarina (strain NCIMB 400).